A 316-amino-acid chain; its full sequence is BTB/POZ domain-containing adapter for CUL3-mediated RhoA degradation protein 2 (316 aa).

The BTB domain maps to 28 to 96; sequence KYVQLNVGGS…LRDDTITLPQ (69 aa). Polar residues predominate over residues 268 to 279; sequence EATSRSRSQASP. The tract at residues 268-288 is disordered; that stretch reads EATSRSRSQASPSEDEDTFEL. S278 is subject to Phosphoserine. S280 is subject to Phosphoserine; by CK2.

This sequence belongs to the BACURD family. In terms of assembly, component of the BCR(TNFAIP1) E3 ubiquitin ligase complex, at least composed of CUL3, TNFAIP1/BACURD2 and RBX1. Interacts with RHOA; with a preference for RhoA-GDP. Interacts with RHOB. Interacts with PCNA. Interacts with CSNK2B. Phosphorylation at Ser-280 by CK2 facilitates the nucleus localization and increases interaction with PCNA.

The protein resides in the cytoplasm. It is found in the nucleus. It localises to the endosome. It functions in the pathway protein modification; protein ubiquitination. In terms of biological role, substrate-specific adapter of a BCR (BTB-CUL3-RBX1) E3 ubiquitin-protein ligase complex involved in regulation of cytoskeleton structure. The BCR(TNFAIP1) E3 ubiquitin ligase complex mediates the ubiquitination of RHOA, leading to its degradation by the proteasome, thereby regulating the actin cytoskeleton and cell migration. Its interaction with RHOB may regulate apoptosis. May enhance the PCNA-dependent DNA polymerase delta activity. This is BTB/POZ domain-containing adapter for CUL3-mediated RhoA degradation protein 2 (Tnfaip1) from Mus musculus (Mouse).